Reading from the N-terminus, the 555-residue chain is Transmembrane protein 87B (555 aa).

The first 42 residues, 1–42 (MVAACRSVAGLLPRRRRCFPARAPLLRVALCLLCWTPAAVRA), serve as a signal peptide directing secretion. The Lumenal portion of the chain corresponds to 43-214 (VPELGLWLET…PHGYISASDW (172 aa)). Residues asparagine 68 and asparagine 197 are each glycosylated (N-linked (GlcNAc...) asparagine). A helical membrane pass occupies residues 215–235 (PLMIFYMVMCIVYILYGILWL). At 236 to 247 (TWSACYWKDILR) the chain is on the cytoplasmic side. Residues 248–268 (IQFWIAAVIFLGMLEKAVFYS) traverse the membrane as a helical segment. Residues 269-299 (EYQNISNTGLSTQGLLIFAELISAIKRTLAR) are Lumenal-facing. Asparagine 272 is a glycosylation site (N-linked (GlcNAc...) asparagine). Residues 300 to 320 (LLVIIVSLGYGIVKPRLGTVM) form a helical membrane-spanning segment. The Cytoplasmic segment spans residues 321–322 (HR). A helical transmembrane segment spans residues 323 to 343 (VIGLGLLYLIFAAVEGVMRVI). Over 344–350 (GGSNHLA) the chain is Lumenal. The helical transmembrane segment at 351–371 (VVLDDIILAVIDSIFVWFIFI) threads the bilayer. Over 372 to 396 (SLAQTMKTLRLRKNTVKFSLYRHFK) the chain is Cytoplasmic. A helical transmembrane segment spans residues 397-417 (NTLIFAVLASIVFMGWTTKTF). Residues 418-429 (RIAKCQSDWMER) lie on the Lumenal side of the membrane. The chain crosses the membrane as a helical span at residues 430-450 (WVDDAFWSFLFSLILIVIMFL). Residues 451-555 (WRPSANNQRY…EKMFSSEKIM (105 aa)) lie on the Cytoplasmic side of the membrane. 4 positions are modified to phosphoserine: serine 469, serine 494, serine 496, and serine 534.

The protein belongs to the LU7TM family. TMEM87 subfamily.

It localises to the golgi apparatus membrane. Its function is as follows. May be involved in retrograde transport from endosomes to the trans-Golgi network (TGN). The chain is Transmembrane protein 87B from Homo sapiens (Human).